The sequence spans 1053 residues: Phosphoenolpyruvate carboxylase (1053 aa).

H246 is a catalytic residue. The segment covering 461–473 (RNTRLQQQQEKDP) has biased composition (basic and acidic residues). A disordered region spans residues 461–480 (RNTRLQQQQEKDPTTPLPEY). K699 is an active-site residue.

It belongs to the PEPCase type 1 family. Mg(2+) is required as a cofactor.

The enzyme catalyses oxaloacetate + phosphate = phosphoenolpyruvate + hydrogencarbonate. Functionally, forms oxaloacetate, a four-carbon dicarboxylic acid source for the tricarboxylic acid cycle. The polypeptide is Phosphoenolpyruvate carboxylase (ppc) (Synechococcus sp. (strain ATCC 27144 / PCC 6301 / SAUG 1402/1) (Anacystis nidulans)).